Reading from the N-terminus, the 255-residue chain is Formate hydrogenlyase subunit 7 (255 aa).

C45, C51, C115, and C145 together coordinate [4Fe-4S] cluster.

Belongs to the complex I 20 kDa subunit family. As to quaternary structure, FHL comprises of a formate dehydrogenase, unidentified electron carriers and a hydrogenase (isoenzyme 3). In this non-energy conserving pathway molecular hydrogen and carbodioxide from formate are released. The cofactor is [4Fe-4S] cluster.

This is Formate hydrogenlyase subunit 7 (hycG) from Escherichia coli (strain K12).